Reading from the N-terminus, the 147-residue chain is NAD(P)H-quinone oxidoreductase subunit N (147 aa).

The protein belongs to the complex I NdhN subunit family. In terms of assembly, NDH-1 can be composed of about 15 different subunits; different subcomplexes with different compositions have been identified which probably have different functions.

It localises to the cellular thylakoid membrane. The enzyme catalyses a plastoquinone + NADH + (n+1) H(+)(in) = a plastoquinol + NAD(+) + n H(+)(out). The catalysed reaction is a plastoquinone + NADPH + (n+1) H(+)(in) = a plastoquinol + NADP(+) + n H(+)(out). Its function is as follows. NDH-1 shuttles electrons from an unknown electron donor, via FMN and iron-sulfur (Fe-S) centers, to quinones in the respiratory and/or the photosynthetic chain. The immediate electron acceptor for the enzyme in this species is believed to be plastoquinone. Couples the redox reaction to proton translocation, and thus conserves the redox energy in a proton gradient. Cyanobacterial NDH-1 also plays a role in inorganic carbon-concentration. This is NAD(P)H-quinone oxidoreductase subunit N from Synechococcus sp. (strain JA-3-3Ab) (Cyanobacteria bacterium Yellowstone A-Prime).